We begin with the raw amino-acid sequence, 129 residues long: Histone H2A (129 aa).

It belongs to the histone H2A family. As to quaternary structure, the nucleosome is a histone octamer containing two molecules each of H2A, H2B, H3 and H4 assembled in one H3-H4 heterotetramer and two H2A-H2B heterodimers. The octamer wraps approximately 147 bp of DNA.

The protein resides in the nucleus. It localises to the chromosome. Its function is as follows. Core component of nucleosome. Nucleosomes wrap and compact DNA into chromatin, limiting DNA accessibility to the cellular machineries which require DNA as a template. Histones thereby play a central role in transcription regulation, DNA repair, DNA replication and chromosomal stability. DNA accessibility is regulated via a complex set of post-translational modifications of histones, also called histone code, and nucleosome remodeling. In Chlamydomonas reinhardtii (Chlamydomonas smithii), this protein is Histone H2A (H2A-II).